Here is a 488-residue protein sequence, read N- to C-terminus: Dihydrolipoyl dehydrogenase, mitochondrial (488 aa).

A mitochondrion-targeting transit peptide spans 1–25 (MLRINRISNLRTFGQRFFSTEQQDV). FAD-binding positions include 52-61 (EKRGKLGGTC), Lys-70, Gly-134, and 163-165 (TGS). An intrachain disulfide couples Cys-61 to Cys-66. NAD(+) is bound by residues 200–207 (GGGVIGLE), Glu-223, Val-257, and Gly-294. Residues Asp-335 and 341–344 (MLAH) contribute to the FAD site. Catalysis depends on His-467, which acts as the Proton acceptor.

Belongs to the class-I pyridine nucleotide-disulfide oxidoreductase family. Requires FAD as cofactor.

It localises to the mitochondrion matrix. The catalysed reaction is N(6)-[(R)-dihydrolipoyl]-L-lysyl-[protein] + NAD(+) = N(6)-[(R)-lipoyl]-L-lysyl-[protein] + NADH + H(+). The protein is Dihydrolipoyl dehydrogenase, mitochondrial (lpd) of Dictyostelium discoideum (Social amoeba).